Consider the following 292-residue polypeptide: Elongation factor Ts (292 aa).

The tract at residues T82–V85 is involved in Mg(2+) ion dislocation from EF-Tu.

The protein belongs to the EF-Ts family.

Its subcellular location is the cytoplasm. In terms of biological role, associates with the EF-Tu.GDP complex and induces the exchange of GDP to GTP. It remains bound to the aminoacyl-tRNA.EF-Tu.GTP complex up to the GTP hydrolysis stage on the ribosome. The chain is Elongation factor Ts from Legionella pneumophila (strain Paris).